Here is a 230-residue protein sequence, read N- to C-terminus: uncharacterized protein (230 aa).

Transmembrane regions (helical) follow at residues 34-54 (FFAG…MNFQ), 56-76 (VVQY…GLMF), 87-107 (MLFA…GMVI), 111-131 (GLGA…LMSV), 146-166 (MLFI…FLGS), 167-187 (PMFQ…YIAY), and 205-225 (VSLY…IGIF).

The protein belongs to the BI1 family.

The protein resides in the cell membrane. This is an uncharacterized protein from Helicobacter pylori (strain J99 / ATCC 700824) (Campylobacter pylori J99).